A 326-amino-acid chain; its full sequence is MPDLHRLALSALQYRPVGAQSGNASSAAASCTGDYMAGDSSLERDCGRLADGCSFPQVRGSATGVSDQSLGGSIHFSNAGRDEYVVELGRLLDLTDGVAQPKKLFDLLSAFAFKFGCKWLAYGPLTSDHKALNRVKCDSEEILNYPDGWRERCLEMGYETIAPVIKESRMGAGPIRWSDMYSDASTTEYERRMFDEAAMFGLRSGITVPLRGPRGSCAIMSFARHCEREFHDRTIAYLQLAATHFHLRVAKIANLNAVQKIPALSLREKECVLWVARGKSSWDIGVIMRISENTVNFHIKNVMRKLGTSSRTVAAIKAISLGIIEL.

Residues 257 to 322 enclose the HTH luxR-type domain; sequence AVQKIPALSL…VAAIKAISLG (66 aa). Residues 281 to 300 constitute a DNA-binding region (H-T-H motif); sequence SWDIGVIMRISENTVNFHIK.

This sequence belongs to the autoinducer-regulated transcriptional regulatory protein family.

This Sinorhizobium fredii (strain NBRC 101917 / NGR234) protein is Putative HTH-type transcriptional regulator y4qH.